Here is a 159-residue protein sequence, read N- to C-terminus: Cyclic pyranopterin monophosphate synthase (159 aa).

Substrate-binding positions include 76–78 (MCH) and 114–115 (ME). Asp129 is a catalytic residue.

The protein belongs to the MoaC family. Homohexamer; trimer of dimers.

It catalyses the reaction (8S)-3',8-cyclo-7,8-dihydroguanosine 5'-triphosphate = cyclic pyranopterin phosphate + diphosphate. The protein operates within cofactor biosynthesis; molybdopterin biosynthesis. In terms of biological role, catalyzes the conversion of (8S)-3',8-cyclo-7,8-dihydroguanosine 5'-triphosphate to cyclic pyranopterin monophosphate (cPMP). The polypeptide is Cyclic pyranopterin monophosphate synthase (Natranaerobius thermophilus (strain ATCC BAA-1301 / DSM 18059 / JW/NM-WN-LF)).